Consider the following 248-residue polypeptide: Chromatin target of PRMT1 protein (248 aa).

At Ala-2 the chain carries N-acetylalanine. Thr-33 carries the post-translational modification Phosphothreonine. Ser-40, Ser-49, and Ser-64 each carry phosphoserine. Lys-70 is covalently cross-linked (Glycyl lysine isopeptide (Lys-Gly) (interchain with G-Cter in SUMO2)). Residues 151-204 form a disordered region; it reads LRRGGVRGRGGPGRGGLGRGAMGRGGIGGRGRGMIGRGRGGFGGRGRGRGRGRG. Residues 153–206 are interaction with PRMT1; it reads RGGVRGRGGPGRGGLGRGAMGRGGIGGRGRGMIGRGRGGFGGRGRGRGRGRGAL. The segment covering 157 to 195 has biased composition (gly residues); the sequence is RGRGGPGRGGLGRGAMGRGGIGGRGRGMIGRGRGGFGGR. Positions 194 to 203 match the GAR motif; involved in 5hmC binding motif; that stretch reads GRGRGRGRGR. At Thr-242 the chain carries Phosphothreonine.

Interacts with PRMT1 and PRMT5. Interacts with the 5FMC complex; the interaction is methylation-dependent. Interacts with FYTTD1, SET and PRC1 complex members CBX4, RNF2 and PHC2; the interactions are methylation-independent. Interacts with ZNF148. Component of the transcription/export (TREX) complex at least composed of ALYREF/THOC4, DDX39B, SARNP/CIP29, CHTOP and the THO subcomplex; TREX seems to have dynamic structure involving ATP-dependent remodeling; in the complex interacts (methylated) with ALYREF/THOC4 and with DDX39B in a methylation-independent manner. Interacts (methylated) with NXF1; the interaction is mutually exclusive with the NXF1:THOC5 interaction. Interacts with WDR77 and ERH. In terms of processing, asymmetrically methylated by PRMT1. Symmetrically methylated by PRMT5. In terms of tissue distribution, expressed in an erythroid progenitor cell line derived from peripheral blood. Expressed in glioblastoma cells.

It is found in the nucleus. The protein resides in the nucleolus. It localises to the nucleoplasm. Its subcellular location is the nucleus speckle. Functionally, plays an important role in the ligand-dependent activation of estrogen receptor target genes. May play a role in the silencing of fetal globin genes. Recruits the 5FMC complex to ZNF148, leading to desumoylation of ZNF148 and subsequent transactivation of ZNF148 target genes. Plays an important role in the tumorigenicity of glioblastoma cells. Binds to 5-hydroxymethylcytosine (5hmC) and associates with the methylosome complex containing PRMT1, PRMT5, MEP50 and ERH. The CHTOP-methylosome complex associated with 5hmC is recruited to selective sites on the chromosome, where it methylates H4R3 and activates the transcription of genes involved in glioblastomagenesis. In terms of biological role, required for effective mRNA nuclear export and is a component of the TREX complex which is thought to couple mRNA transcription, processing and nuclear export, and specifically associates with spliced mRNA and not with unspliced pre-mRNA. TREX is recruited to spliced mRNAs by a transcription-independent mechanism, binds to mRNA upstream of the exon-junction complex (EJC) and is recruited in a splicing- and cap-dependent manner to a region near the 5' end of the mRNA where it functions in mRNA export to the cytoplasm via the TAP/NFX1 pathway. The TREX complex is essential for the export of Kaposi's sarcoma-associated herpesvirus (KSHV) intronless mRNAs and infectious virus production. Stimulates DDX39B ATPase and helicase activities. In cooperation with ALYREF/THOC4 enhances NXF1 RNA binding activity. The chain is Chromatin target of PRMT1 protein (CHTOP) from Homo sapiens (Human).